A 180-amino-acid chain; its full sequence is Large ribosomal subunit protein uL6 (180 aa).

Belongs to the universal ribosomal protein uL6 family. As to quaternary structure, part of the 50S ribosomal subunit.

This protein binds to the 23S rRNA, and is important in its secondary structure. It is located near the subunit interface in the base of the L7/L12 stalk, and near the tRNA binding site of the peptidyltransferase center. The polypeptide is Large ribosomal subunit protein uL6 (Clostridium kluyveri (strain NBRC 12016)).